Here is a 783-residue protein sequence, read N- to C-terminus: MIFLNTFARCLLTCFVLCSGTARSSDTNDTTPASAKHLQTTSLLTCMDNSQLTASFFDVKFYPDNNTVIFDIDATTTLNGNVTVKAELLTYGLKVLDKTFDLCSLGQVSLCPLSAGRIDVMSTQVIESSITKQFPGIAYTIPDLDAQVRVVAYAQNDTEFETPLACVQAILSNGKTVQTKYAAWPIAAISGVGVLTSGFVSVIGYSATAAHIASNSISLFIYFQNLAITAMMGVSRVPPIAAAWTQNFQWSMGIINTNFMQKIFDWYVQATNGVSNVVVANKDVLSISVQKRAISMASSSDYNFDTILDDSNLYTTSEKDPSNYSAKILVLRGIERVAYLANIELSNFFLTGIVFFLFFLFVVVVSLIFFKALLEVLTRARILKETSNFFQYRKNWGSIIKGTLFRLSIIAFPQVSLLAIWEFTQVNSPAIVVDAVVILLIITGLLVYGTIRVFIKGRESLRLYKNPAYLLYSDTYFLNKFGFLYVQFKADKFWWLLPLLSYAFLRSLFVAVLQNQGKAQAMIIFVIELAYFVCLCWIRPYLDKRTNVFNIAIHLVNLINAFFFLFFSNLFKQPAVVSSVMAVILFVLNAVFALFLLLFTIVTCTLALLHRNPDVRYQPMKDDRVSFIPKIQNDFDGKNKNDSELFELRKAVMDTNENEEEKMFRDDTFGKNLNANTNTARLFDDETSSSSFKQNSSPFDASEVTEQPVQPTSAVMGTGGSFLSPQYQRASSASRTNLAPNNTSTSSLMKPESSLYLGNSNKSYSHFNNNGSNENARNNNPYL.

An N-terminal signal peptide occupies residues 1-22; sequence MIFLNTFARCLLTCFVLCSGTA. At 23–182 the chain is on the lumenal side; that stretch reads RSSDTNDTTP…NGKTVQTKYA (160 aa). N-linked (GlcNAc...) asparagine glycosylation is found at N28, N65, N81, and N156. The chain crosses the membrane as a helical span at residues 183-203; it reads AWPIAAISGVGVLTSGFVSVI. At 204–211 the chain is on the cytoplasmic side; it reads GYSATAAH. Residues 212–232 form a helical membrane-spanning segment; sequence IASNSISLFIYFQNLAITAMM. Over 233–347 the chain is Lumenal; sequence GVSRVPPIAA…AYLANIELSN (115 aa). Residue N323 is glycosylated (N-linked (GlcNAc...) asparagine). The helical transmembrane segment at 348–368 threads the bilayer; the sequence is FFLTGIVFFLFFLFVVVVSLI. Over 369 to 402 the chain is Cytoplasmic; the sequence is FFKALLEVLTRARILKETSNFFQYRKNWGSIIKG. A helical transmembrane segment spans residues 403-423; it reads TLFRLSIIAFPQVSLLAIWEF. Residues 424–430 are Lumenal-facing; sequence TQVNSPA. A helical transmembrane segment spans residues 431–451; the sequence is IVVDAVVILLIITGLLVYGTI. The Cytoplasmic portion of the chain corresponds to 452–492; it reads RVFIKGRESLRLYKNPAYLLYSDTYFLNKFGFLYVQFKADK. The chain crosses the membrane as a helical span at residues 493–513; sequence FWWLLPLLSYAFLRSLFVAVL. The Lumenal segment spans residues 514–521; it reads QNQGKAQA. Residues 522 to 542 form a helical membrane-spanning segment; it reads MIIFVIELAYFVCLCWIRPYL. The Cytoplasmic portion of the chain corresponds to 543–547; it reads DKRTN. Residues 548 to 568 traverse the membrane as a helical segment; it reads VFNIAIHLVNLINAFFFLFFS. Topologically, residues 569 to 581 are lumenal; it reads NLFKQPAVVSSVM. Residues 582 to 602 traverse the membrane as a helical segment; sequence AVILFVLNAVFALFLLLFTIV. At 603 to 783 the chain is on the cytoplasmic side; that stretch reads TCTLALLHRN…ENARNNNPYL (181 aa). A disordered region spans residues 681–783; that stretch reads RLFDDETSSS…ENARNNNPYL (103 aa). Residues 688–697 show a composition bias toward low complexity; that stretch reads SSSSFKQNSS. 2 stretches are compositionally biased toward polar residues: residues 704-748 and 756-767; these read VTEQ…TSSL and YLGNSNKSYSHF. Over residues 768–783 the composition is skewed to low complexity; it reads NNNGSNENARNNNPYL.

It belongs to the transient receptor potential (TRP) ion channel family.

Its subcellular location is the endoplasmic reticulum membrane. Its function is as follows. May be responsible for the transport of FAD into the endoplasmic reticulum lumen, where it is required for oxidative protein folding. The sequence is that of Flavin carrier protein 2 (FLC2) from Saccharomyces cerevisiae (strain ATCC 204508 / S288c) (Baker's yeast).